The primary structure comprises 360 residues: MQIKEQLRQLKPYQPGKPIEEVKMEYGLEKVVKLASNENPFGCSQAAKDALHQEIEQLALYPDGYSAALRTRLSEHLQVSESSIIFGNGSDELVQIICRSLLNDQANTITAAPTFPQYRHNAVIEGAEVREVPLRSDGAHDLDRMLEAIDGETKIIWVCNPNNPTGTYTSEQELIAFLNRVPEHILVVLDEAYYEYVTAEDYPESIPLLKQYPNVMILRTFSKAYGLAALRVGYGIADEALIRQIEPAREPFNTSRIGQASALAALDDQTFIQECVEKNKAGLKQYYDFAETHGLTCYPSQTNFVLIDFNRPADELFQALLEKGYIVRSGQALGFPTALRITVGTKEQNEEILTILAEIL.

Lys223 carries the N6-(pyridoxal phosphate)lysine modification.

The protein belongs to the class-II pyridoxal-phosphate-dependent aminotransferase family. Histidinol-phosphate aminotransferase subfamily. Homodimer. Pyridoxal 5'-phosphate serves as cofactor.

The catalysed reaction is L-histidinol phosphate + 2-oxoglutarate = 3-(imidazol-4-yl)-2-oxopropyl phosphate + L-glutamate. The protein operates within amino-acid biosynthesis; L-histidine biosynthesis; L-histidine from 5-phospho-alpha-D-ribose 1-diphosphate: step 7/9. This chain is Histidinol-phosphate aminotransferase, found in Bacillus velezensis (strain DSM 23117 / BGSC 10A6 / LMG 26770 / FZB42) (Bacillus amyloliquefaciens subsp. plantarum).